The sequence spans 492 residues: Cobyric acid synthase (492 aa).

Positions 259–453 constitute a GATase cobBQ-type domain; the sequence is HTTVAVVAYP…LHGLFEDAVA (195 aa). Catalysis depends on Cys-340, which acts as the Nucleophile. His-445 is an active-site residue.

The protein belongs to the CobB/CobQ family. CobQ subfamily.

It participates in cofactor biosynthesis; adenosylcobalamin biosynthesis. Functionally, catalyzes amidations at positions B, D, E, and G on adenosylcobyrinic A,C-diamide. NH(2) groups are provided by glutamine, and one molecule of ATP is hydrogenolyzed for each amidation. This Paracidovorax citrulli (strain AAC00-1) (Acidovorax citrulli) protein is Cobyric acid synthase.